The following is a 314-amino-acid chain: 4-hydroxy-3-methylbut-2-enyl diphosphate reductase (314 aa).

Residue Cys12 participates in [4Fe-4S] cluster binding. Residues His41 and His74 each contribute to the (2E)-4-hydroxy-3-methylbut-2-enyl diphosphate site. His41 and His74 together coordinate dimethylallyl diphosphate. Isopentenyl diphosphate is bound by residues His41 and His74. Cys96 contributes to the [4Fe-4S] cluster binding site. A (2E)-4-hydroxy-3-methylbut-2-enyl diphosphate-binding site is contributed by His124. His124 is a dimethylallyl diphosphate binding site. An isopentenyl diphosphate-binding site is contributed by His124. Glu126 acts as the Proton donor in catalysis. Thr167 lines the (2E)-4-hydroxy-3-methylbut-2-enyl diphosphate pocket. Residue Cys197 participates in [4Fe-4S] cluster binding. Positions 225, 226, 227, and 269 each coordinate (2E)-4-hydroxy-3-methylbut-2-enyl diphosphate. Residues Ser225, Ser226, Asn227, and Ser269 each coordinate dimethylallyl diphosphate. Isopentenyl diphosphate contacts are provided by Ser225, Ser226, Asn227, and Ser269.

The protein belongs to the IspH family. Requires [4Fe-4S] cluster as cofactor.

The catalysed reaction is isopentenyl diphosphate + 2 oxidized [2Fe-2S]-[ferredoxin] + H2O = (2E)-4-hydroxy-3-methylbut-2-enyl diphosphate + 2 reduced [2Fe-2S]-[ferredoxin] + 2 H(+). It carries out the reaction dimethylallyl diphosphate + 2 oxidized [2Fe-2S]-[ferredoxin] + H2O = (2E)-4-hydroxy-3-methylbut-2-enyl diphosphate + 2 reduced [2Fe-2S]-[ferredoxin] + 2 H(+). It functions in the pathway isoprenoid biosynthesis; dimethylallyl diphosphate biosynthesis; dimethylallyl diphosphate from (2E)-4-hydroxy-3-methylbutenyl diphosphate: step 1/1. The protein operates within isoprenoid biosynthesis; isopentenyl diphosphate biosynthesis via DXP pathway; isopentenyl diphosphate from 1-deoxy-D-xylulose 5-phosphate: step 6/6. Functionally, catalyzes the conversion of 1-hydroxy-2-methyl-2-(E)-butenyl 4-diphosphate (HMBPP) into a mixture of isopentenyl diphosphate (IPP) and dimethylallyl diphosphate (DMAPP). Acts in the terminal step of the DOXP/MEP pathway for isoprenoid precursor biosynthesis. In Haemophilus influenzae (strain 86-028NP), this protein is 4-hydroxy-3-methylbut-2-enyl diphosphate reductase.